The sequence spans 218 residues: uncharacterized protein (218 aa).

A disordered region spans residues 1–24 (MAAQPQAPSAGGRPRAGKAVKSVA). Residues 28 to 88 (KLSRESIVEG…AVRIRVIDDI (61 aa)) enclose the HTH tetR-type domain. The H-T-H motif DNA-binding region spans 51 to 70 (TINALATQLGTKGPSLYNHV). The residue at position 57 (T57) is a Phosphothreonine; by PknH.

Post-translationally, phosphorylated on Thr-57 by PknH.

This is an uncharacterized protein from Mycobacterium tuberculosis (strain ATCC 25618 / H37Rv).